We begin with the raw amino-acid sequence, 165 residues long: UPF0254 protein MmarC5_0742 (165 aa).

The protein belongs to the UPF0254 family.

This chain is UPF0254 protein MmarC5_0742, found in Methanococcus maripaludis (strain C5 / ATCC BAA-1333).